The sequence spans 258 residues: Small ribosomal subunit protein uS2 (258 aa).

It belongs to the universal ribosomal protein uS2 family.

This is Small ribosomal subunit protein uS2 from Streptococcus suis (strain 98HAH33).